We begin with the raw amino-acid sequence, 3088 residues long: Protein prune homolog 2 (3088 aa).

Residue Met1 is modified to N-acetylmethionine. The short motif at 109-111 (GSS) is the DHH motif element. 22 disordered regions span residues 433-468 (IRSSRSSKESSVFLSDDSPVGEGAGPHHTLLPGLDS), 490-628 (HFDL…EPAS), 673-759 (SSEQ…QGTN), 771-795 (SGRSPTAMPEPWGNPTDDGEPAAVA), 846-909 (SELL…PKTR), 952-1080 (SNLG…SSYD), 1192-1211 (SDEHTKDSAPSEHHTLNEKS), 1231-1371 (SFML…LVAS), 1413-1452 (RDVQTGMSADNLQPKDTHEKHLMSQRNSGETTETSDGMNF), 1472-1491 (LEPENVGGGPPHRVPRSLDF), 1515-1585 (VKGS…QESE), 1632-1698 (DSFS…EESI), 1741-1768 (LDSSEPAENENKSNPFCDNQQSSPDPWT), 1782-1813 (VEKEKRSSPETGTTGDVAWQISPKASFPKNED), 2089-2114 (ILTHCEHDSNSQASDSPDICHDSEAK), 2173-2215 (YQAD…PDMA), 2240-2260 (QEPTPEGDGSWISDSFSPESQ), 2492-2542 (SDLP…KNED), 2589-2667 (TQLA…SELG), 2687-2710 (ALEEASGPVSQSQKSKSRGRAGPD), 2814-2833 (QSEGSILSDDNLDSPDEIDI), and 2841-2875 (PDEADSFEYTGHDPTANKDSGQESESIPEYTAEEE). The span at 503–512 (SGQSQQSSHS) shows a compositional bias: low complexity. A compositionally biased stretch (basic and acidic residues) spans 562 to 582 (SLVEHDEEFVQRQDSPRDNSE). 2 stretches are compositionally biased toward polar residues: residues 613–625 (MNSLVESSPSTEE) and 673–684 (SSEQESVFQSPE). Basic and acidic residues predominate over residues 685–699 (SWKEHKPSSIDRRAS). The segment covering 750 to 759 (LPNTSPQGTN) has biased composition (polar residues). Polar residues predominate over residues 846-857 (SELLDNSPSEIN). Residues 865 to 876 (WGKKNNDSRDHI) show a composition bias toward basic and acidic residues. The span at 881-894 (NPSSDLDHTWTNSK) shows a compositional bias: polar residues. The segment covering 895–909 (PPKEDQNGLVDPKTR) has biased composition (basic and acidic residues). Low complexity predominate over residues 964-977 (DTNYSTSDSYTSPT). Over residues 980-1000 (GDEKETEHKPFAKEEGFESKD) the composition is skewed to basic and acidic residues. Composition is skewed to polar residues over residues 1001–1027 (GNSTAEETDIPPQSLQQSSRNRISSGP) and 1037–1048 (HTDNSSEINTTH). 5 stretches are compositionally biased toward basic and acidic residues: residues 1049–1062 (NLDENELKTEHTDG), 1192–1208 (SDEHTKDSAPSEHHTLN), 1282–1293 (HLDKQDTERETL), 1314–1339 (DPWKGHGDGQSESEKEAQGATDRGHL), and 1425–1434 (QPKDTHEKHL). Residues 1436–1450 (SQRNSGETTETSDGM) show a composition bias toward polar residues. Positions 1537 to 1585 (SSEYTHSSASSPELNDSSVALSSWGQQPSSGYQEENQGNWSEQNHQESE) are enriched in polar residues. The span at 1687–1698 (SDDDSVGGEESI) shows a compositional bias: acidic residues. Residues 1752–1768 (KSNPFCDNQQSSPDPWT) show a composition bias toward polar residues. Basic and acidic residues-rich tracts occupy residues 2516–2542 (EKTIPTKEPEQIKSEYKEERCTEKNED) and 2604–2622 (NERKGLSAEKMSSKSDTRS). Positions 2623 to 2632 (SFESPAQDQS) are enriched in polar residues. Residues 2823–2833 (DNLDSPDEIDI) are compositionally biased toward acidic residues. One can recognise a CRAL-TRIO domain in the interval 2895–3056 (DMKVIEPYRR…SIIKLDEELR (162 aa)).

The protein belongs to the PPase class C family. Prune subfamily. A high level of expression seen in the nervous system (brain, cerebellum and spinal cord) as well as adrenal gland. Expressed at high levels in noneuroblastoma, rhabdomyosarcoma, melanoma and some osteosarcoma cell lines, whereas at only low levels in cancer cell lines of liver, breast, thyroid and colon. Expression is significantly higher in favorable tumors than aggressive ones.

The protein resides in the cytoplasm. May play an important role in regulating differentiation, survival and aggressiveness of the tumor cells. In Homo sapiens (Human), this protein is Protein prune homolog 2 (PRUNE2).